The sequence spans 101 residues: Movement protein (101 aa).

The disordered stretch occupies residues M1 to G22. A helical membrane pass occupies residues E30–L50. Residues N79–G101 form a disordered region. Over residues P80–N92 the composition is skewed to polar residues.

The protein belongs to the mastrevirus movement protein family. As to quaternary structure, interacts with the capsid protein (CP). Part of a MP-CP-viral DNA complex.

The protein resides in the host membrane. In terms of biological role, involved in the viral transport within, and between cells. This is Movement protein from Avena sativa (Oat).